Reading from the N-terminus, the 329-residue chain is Serine/threonine-protein phosphatase PP2A catalytic subunit (329 aa).

Residues Met1–Gly25 are disordered. Positions Asp8–His17 are enriched in basic and acidic residues. Mn(2+)-binding residues include Asp77, His79, Asp105, and Asn137. His138 functions as the Proton donor in the catalytic mechanism. Mn(2+) contacts are provided by His187 and His261. Leucine methyl ester is present on Leu329.

Belongs to the PPP phosphatase family. PP-2A subfamily. It depends on Mn(2+) as a cofactor.

The enzyme catalyses O-phospho-L-seryl-[protein] + H2O = L-seryl-[protein] + phosphate. The catalysed reaction is O-phospho-L-threonyl-[protein] + H2O = L-threonyl-[protein] + phosphate. Functionally, involved in hyphal morphogenesis. The sequence is that of Serine/threonine-protein phosphatase PP2A catalytic subunit (pphA) from Emericella nidulans (strain FGSC A4 / ATCC 38163 / CBS 112.46 / NRRL 194 / M139) (Aspergillus nidulans).